A 516-amino-acid polypeptide reads, in one-letter code: Delta(24)-sterol reductase (516 aa).

Residues 1–22 form the signal peptide; it reads MEPAVSLAVCALLFLLWVRVKG. Topologically, residues 23–31 are lumenal; the sequence is LEFVLIHQR. A helical membrane pass occupies residues 32 to 52; that stretch reads WVFVCLFLLPLSLIFDIYYYV. The Cytoplasmic portion of the chain corresponds to 53–516; sequence RAWVVFKLSS…YDKICKAARH (464 aa). One can recognise an FAD-binding PCMH-type domain in the interval 58-234; the sequence is FKLSSAPRLH…VAAEIRIIPA (177 aa). 163 to 175 provides a ligand contact to FAD; it reads TVGGLIMGTGIES.

This sequence belongs to the FAD-binding oxidoreductase/transferase type 4 family. As to quaternary structure, interacts with DHCR7; this interaction regulates DHCR7 activity. FAD is required as a cofactor.

It localises to the endoplasmic reticulum membrane. Its subcellular location is the golgi apparatus membrane. The catalysed reaction is cholesterol + NADP(+) = desmosterol + NADPH + H(+). It catalyses the reaction lanosterol + NADPH + H(+) = 24,25-dihydrolanosterol + NADP(+). It carries out the reaction 5alpha-cholest-8-en-3beta-ol + NADP(+) = zymosterol + NADPH + H(+). It functions in the pathway steroid biosynthesis; cholesterol biosynthesis. Functionally, catalyzes the reduction of the delta-24 double bond of sterol intermediates during cholesterol biosynthesis. In addition to its cholesterol-synthesizing activity, can protect cells from oxidative stress by reducing caspase 3 activity during apoptosis induced by oxidative stress. Also protects against amyloid-beta peptide-induced apoptosis. This is Delta(24)-sterol reductase (Dhcr24) from Rattus norvegicus (Rat).